We begin with the raw amino-acid sequence, 104 residues long: Proteasome subunit beta type-8 (104 aa).

The protein belongs to the peptidase T1B family. In terms of assembly, the 26S proteasome consists of a 20S proteasome core and two 19S regulatory subunits. The 20S proteasome core is composed of 28 subunits that are arranged in four stacked rings, resulting in a barrel-shaped structure. The two end rings are each formed by seven alpha subunits, and the two central rings are each formed by seven beta subunits. The catalytic chamber with the active sites is on the inside of the barrel. Component of the immunoproteasome, where it displaces the equivalent housekeeping subunit PSMB5. Component of the spermatoproteasome, a form of the proteasome specifically found in testis. Directly interacts with POMP.

The protein localises to the cytoplasm. It is found in the nucleus. It carries out the reaction Cleavage of peptide bonds with very broad specificity.. In terms of biological role, the proteasome is a multicatalytic proteinase complex which is characterized by its ability to cleave peptides with Arg, Phe, Tyr, Leu, and Glu adjacent to the leaving group at neutral or slightly basic pH. The proteasome has an ATP-dependent proteolytic activity. This subunit is involved in antigen processing to generate class I binding peptides. May participate in the generation of spliced peptides resulting from the ligation of two separate proteasomal cleavage products that are not contiguous in the parental protein. Required for adipocyte differentiation. The sequence is that of Proteasome subunit beta type-8 (PSMB8) from Sus scrofa (Pig).